The sequence spans 469 residues: Trigger factor (469 aa).

Residues 162–243 form the PPIase FKBP-type domain; that stretch reads GDFVSIDLSA…VKSVKERELP (82 aa). The tract at residues 429–469 is disordered; sequence NTIDTSEFFGKHAQSDKADQKTEEADPNSDAIDEEVDEAAE. Residues 437-452 show a composition bias toward basic and acidic residues; the sequence is FGKHAQSDKADQKTEE. A compositionally biased stretch (acidic residues) spans 453 to 469; that stretch reads ADPNSDAIDEEVDEAAE.

It belongs to the FKBP-type PPIase family. Tig subfamily.

The protein resides in the cytoplasm. It catalyses the reaction [protein]-peptidylproline (omega=180) = [protein]-peptidylproline (omega=0). In terms of biological role, involved in protein export. Acts as a chaperone by maintaining the newly synthesized protein in an open conformation. Functions as a peptidyl-prolyl cis-trans isomerase. This chain is Trigger factor, found in Mycobacterium leprae (strain Br4923).